The chain runs to 38 residues: Large ribosomal subunit protein bL36 (38 aa).

It belongs to the bacterial ribosomal protein bL36 family.

The chain is Large ribosomal subunit protein bL36 from Fervidobacterium nodosum (strain ATCC 35602 / DSM 5306 / Rt17-B1).